A 471-amino-acid chain; its full sequence is dTDP-4-dehydro-6-deoxy-alpha-D-glucopyranose 2,3-dehydratase (471 aa).

Residues Trp67, Thr155–Tyr159, Ser193, Asn238, Trp288, Arg351, Gln367–Thr369, Asn372–Tyr373, and Glu405–Arg408 each bind dTDP-4-dehydro-6-deoxy-alpha-D-glucose.

This sequence belongs to the hexose 2,3-dehydratase family. Homodimer.

It catalyses the reaction dTDP-4-dehydro-6-deoxy-alpha-D-glucose = dTDP-3,4-didehydro-2,6-dideoxy-alpha-D-glucose + H2O. Its pathway is antibiotic biosynthesis. In terms of biological role, involved in the biosynthesis of the 2,3,6-trideoxysugar L-epivancosamine, the terminal sugar added to the aglycone scaffold of chloroeremomycin, a member of the glycopeptide antibiotics vancomycin family. Catalyzes the removal of the hydroxyl group at position C-2 of the hexose ring of dTDP-4-dehydro-6-deoxy-alpha-D-glucopyranose, and the oxidation of the hydroxyl group at position C-3 to form a carbonyl functionality. The product of the reaction, dTDP-2,6-dideoxy-D-glycero-hex-2-enos-4-ulose, is a highly unstable diketosugar, which spontaneously forms dTDP-3,4-didehydro-2,6-dideoxy-alpha-D-glucose. The protein is dTDP-4-dehydro-6-deoxy-alpha-D-glucopyranose 2,3-dehydratase of Amycolatopsis orientalis (Nocardia orientalis).